A 2542-amino-acid polypeptide reads, in one-letter code: Highly reducing polyketide synthase (2542 aa).

A Ketosynthase family 3 (KS3) domain is found at P7–A435. Catalysis depends on for beta-ketoacyl synthase activity residues C182, H317, and H357. Residues F545–G872 enclose the Malonyl-CoA:ACP transacylase (MAT) domain. The tract at residues H927 to S1062 is N-terminal hotdog fold. In terms of domain architecture, PKS/mFAS DH spans H927–E1224. Catalysis depends on H959, which acts as the Proton acceptor; for dehydratase activity. The C-terminal hotdog fold stretch occupies residues N1072 to E1224. D1137 acts as the Proton donor; for dehydratase activity in catalysis. The segment at L1275–Y1574 is methyltransferase (CMet) domain. Residues V1606–N1634 are disordered. One can recognise an Enoyl reductase (ER) domain in the interval G1866–L2186. A Ketoreductase (KR) domain is found at A2209–I2389.

Requires pantetheine 4'-phosphate as cofactor.

It participates in antifungal biosynthesis. Its function is as follows. Highly reducing polyketide synthase; part of the gene cluster that mediates the biosynthesis of the tetrahydropyranyl antifungal agent lanomycin that acts as an inhibitor of CYP51 and blocks the ergosterol biosynthesis. The biosynthesis probably begins with the formation of an hexaketide, followed by methionine mediated alkylation of C-2 and C-6, and methylation of the reduced C-3 oxygen, pyran forming reductive ring closure, oxygenation of C-4, beta-keto reduction, enoyl reduction and dehydration of the remaining oxygens, and finally, acylation with glycine to complete the biosynthesis. The sequence is that of Highly reducing polyketide synthase from Pyrenophora dematioidea (Helminthosporium dematioideum).